The sequence spans 201 residues: Peptide deformylase (201 aa).

Positions 92 and 134 each coordinate Fe cation. Residue E135 is part of the active site. H138 provides a ligand contact to Fe cation.

It belongs to the polypeptide deformylase family. Requires Fe(2+) as cofactor.

It catalyses the reaction N-terminal N-formyl-L-methionyl-[peptide] + H2O = N-terminal L-methionyl-[peptide] + formate. Its function is as follows. Removes the formyl group from the N-terminal Met of newly synthesized proteins. Requires at least a dipeptide for an efficient rate of reaction. N-terminal L-methionine is a prerequisite for activity but the enzyme has broad specificity at other positions. The chain is Peptide deformylase from Rhodopirellula baltica (strain DSM 10527 / NCIMB 13988 / SH1).